A 576-amino-acid chain; its full sequence is Boron transporter 1 (576 aa).

The Cytoplasmic segment spans residues 1–84 (MSNESTRVTV…SDWVDAFNYR (84 aa)). Residues 19–48 (ECAQALERTNDELDRESSVSESRSDEESHE) are disordered. Over residues 26 to 48 (RTNDELDRESSVSESRSDEESHE) the composition is skewed to basic and acidic residues. A helical transmembrane segment spans residues 85–105 (VIPSIVDTYFNNLLPAIAFAQ). At 106–116 (DMFDRTDNSYG) the chain is on the extracellular side. The helical transmembrane segment at 117–134 (VNEVLLSSAMAGIVFGVL) threads the bilayer. The Cytoplasmic segment spans residues 135-140 (GGQPLC). The chain crosses the membrane as a helical span at residues 141-160 (IVGVTGPISIFNYTVYEIIK). Residues 161–165 (PLNTS) are Extracellular-facing. The chain crosses the membrane as a helical span at residues 166 to 186 (YFGFMFWICMWSMIFHLVLAF). Residues 187–192 (TNAVCL) lie on the Cytoplasmic side of the membrane. Residues 193–213 (LQYVTTFPCDIFGLFINVVYI) form a helical membrane-spanning segment. The Extracellular segment spans residues 214-235 (QKGIQILTRQFSAKSGEKSVQD). The helical transmembrane segment at 236–256 (GFASVVVALVMTAFGLFFKLF) threads the bilayer. Topologically, residues 257 to 274 (HYYPLFSHRIRTFISDYS) are cytoplasmic. The helical transmembrane segment at 275 to 295 (TALSVLFWSSFTHFGGYLHDV) threads the bilayer. Topologically, residues 296–329 (KFKKLPITKAFFPTSKVNRPQNTWLAYEPIPVKD) are extracellular. Residues 330–350 (VFIALPFGIFLTILFYFDHNV) form a helical membrane-spanning segment. Residues 351–373 (SSLMAQRHQYKLKKPSSFHYDFA) lie on the Cytoplasmic side of the membrane. A helical transmembrane segment spans residues 374–394 (LLGLTTCISGVLGIPAPNGLI). The Extracellular portion of the chain corresponds to 395–438 (PQAPLHTETLLVRDSNQKVISCVEQRFTNTFQGLMILGTMTRPL). The helical transmembrane segment at 439–459 (LVCLGEIPQAVLSGLFFIMGI) threads the bilayer. Residues 460-495 (NGLMTNSIIQRLVFLFSDPNRRDNTSPLMKVSKKSM) are Cytoplasmic-facing. The helical transmembrane segment at 496–516 (LIFLSFSLTGFAGEFAITNTI) threads the bilayer. The Extracellular segment spans residues 517-518 (AA). A helical membrane pass occupies residues 519–539 (IGFPLVLLLSVLVSFSFAYIF). Topologically, residues 540 to 576 (PTEELKILDTNVAQKFTIKNLLLENIRDAKFCDKHED) are cytoplasmic.

This sequence belongs to the anion exchanger (TC 2.A.31) family.

Its subcellular location is the cell membrane. It is found in the vacuole membrane. Functionally, functions in boric acid/borate export across the plasma membrane, and thereby protects yeast cells from boron toxicity. Involved in the trafficking of proteins to the vacuole. This chain is Boron transporter 1 (BOR1), found in Saccharomyces cerevisiae (strain ATCC 204508 / S288c) (Baker's yeast).